A 166-amino-acid polypeptide reads, in one-letter code: Regulatory protein RecX (166 aa).

It belongs to the RecX family.

The protein resides in the cytoplasm. Functionally, modulates RecA activity. The chain is Regulatory protein RecX from Salmonella paratyphi C (strain RKS4594).